We begin with the raw amino-acid sequence, 283 residues long: Bifunctional protein FolD (283 aa).

NADP(+) is bound by residues 164–166, Ser189, and Ile230; that span reads GRS.

It belongs to the tetrahydrofolate dehydrogenase/cyclohydrolase family. As to quaternary structure, homodimer.

It carries out the reaction (6R)-5,10-methylene-5,6,7,8-tetrahydrofolate + NADP(+) = (6R)-5,10-methenyltetrahydrofolate + NADPH. The catalysed reaction is (6R)-5,10-methenyltetrahydrofolate + H2O = (6R)-10-formyltetrahydrofolate + H(+). It functions in the pathway one-carbon metabolism; tetrahydrofolate interconversion. Catalyzes the oxidation of 5,10-methylenetetrahydrofolate to 5,10-methenyltetrahydrofolate and then the hydrolysis of 5,10-methenyltetrahydrofolate to 10-formyltetrahydrofolate. The protein is Bifunctional protein FolD of Pelobacter propionicus (strain DSM 2379 / NBRC 103807 / OttBd1).